Here is a 605-residue protein sequence, read N- to C-terminus: Elongation factor 4 (605 aa).

The 183-residue stretch at 11 to 193 folds into the tr-type G domain; the sequence is KCIRNFSIIA…QIVTRISPPQ (183 aa). GTP contacts are provided by residues 23 to 28 and 140 to 143; these read DHGKST and NKVD.

It belongs to the TRAFAC class translation factor GTPase superfamily. Classic translation factor GTPase family. LepA subfamily.

The protein resides in the cell membrane. It carries out the reaction GTP + H2O = GDP + phosphate + H(+). In terms of biological role, required for accurate and efficient protein synthesis under certain stress conditions. May act as a fidelity factor of the translation reaction, by catalyzing a one-codon backward translocation of tRNAs on improperly translocated ribosomes. Back-translocation proceeds from a post-translocation (POST) complex to a pre-translocation (PRE) complex, thus giving elongation factor G a second chance to translocate the tRNAs correctly. Binds to ribosomes in a GTP-dependent manner. This Aster yellows witches'-broom phytoplasma (strain AYWB) protein is Elongation factor 4.